Reading from the N-terminus, the 312-residue chain is MGVHLEVLDTGEQLMVPVDVLEEENKGTLWKFLLSGAMAGAVSRTGTAPLDRARVYMQVYSSKSNFRNLLSGLRSLVQEGGVRSLWRGNGINVLKIAPEYAIKFSVCEQSKNFFYGVHSSQLFQERVVAGSLAVAVSQTLINPMEVLKTRLTLRFTGQYKGLLDCARQILERDGTRALYRGYLPNMLGIIPYACTDLAVYELLQCLWQKLGRDMKDPSGLVSLSSVTLSTTCGQMASYPLTLVRTRMQAQDTVEGSNPTMQGVFKRILSQQGWPGLYRGMTPTLLKVLPAGGISYLVYEAMKKTLGVQVLSR.

3 Solcar repeats span residues 27–113 (GTLW…SKNF), 121–206 (QLFQ…LQCL), and 217–304 (PSGL…MKKT). A run of 6 helical transmembrane segments spans residues 33 to 50 (LLSG…TAPL), 88 to 107 (GNGI…FSVC), 131 to 144 (SLAV…INPM), 182 to 200 (YLPN…LAVY), 219 to 243 (GLVS…LTLV), and 279 to 298 (GMTP…YLVY).

This sequence belongs to the mitochondrial carrier (TC 2.A.29) family. As to expression, mainly expressed in testis and at lesser levels in brain.

It localises to the mitochondrion inner membrane. It catalyses the reaction Mg(2+)(out) + phosphate(in) + ATP(out) = Mg(2+)(in) + phosphate(out) + ATP(in). It carries out the reaction ADP(out) + phosphate(in) + H(+)(out) = ADP(in) + phosphate(out) + H(+)(in). Functionally, calcium-independent ATP-Mg/Pi exchanger that catalyzes the electroneutral exchange of Mg-ATP or free ADP against an hydrogenphosphate and participates in the net transport of adenine nucleotides across the mitochondria inner membrane. This is Calcium-independent mitochondrial carrier protein SCaMC-3L from Mus musculus (Mouse).